The following is a 409-amino-acid chain: Dual-specificity RNA methyltransferase RlmN (409 aa).

E117 acts as the Proton acceptor in catalysis. Residues 128–377 (LNGRKTLCIS…CTIRQTRGDD (250 aa)) enclose the Radical SAM core domain. A disulfide bridge links C135 with C382. [4Fe-4S] cluster contacts are provided by C142, C146, and C149. S-adenosyl-L-methionine contacts are provided by residues 205–206 (GE), S237, 259–261 (SLH), and N339. Residue C382 is the S-methylcysteine intermediate of the active site.

Belongs to the radical SAM superfamily. RlmN family. [4Fe-4S] cluster is required as a cofactor.

The protein localises to the cytoplasm. It catalyses the reaction adenosine(2503) in 23S rRNA + 2 reduced [2Fe-2S]-[ferredoxin] + 2 S-adenosyl-L-methionine = 2-methyladenosine(2503) in 23S rRNA + 5'-deoxyadenosine + L-methionine + 2 oxidized [2Fe-2S]-[ferredoxin] + S-adenosyl-L-homocysteine. The enzyme catalyses adenosine(37) in tRNA + 2 reduced [2Fe-2S]-[ferredoxin] + 2 S-adenosyl-L-methionine = 2-methyladenosine(37) in tRNA + 5'-deoxyadenosine + L-methionine + 2 oxidized [2Fe-2S]-[ferredoxin] + S-adenosyl-L-homocysteine. Specifically methylates position 2 of adenine 2503 in 23S rRNA and position 2 of adenine 37 in tRNAs. m2A2503 modification seems to play a crucial role in the proofreading step occurring at the peptidyl transferase center and thus would serve to optimize ribosomal fidelity. This is Dual-specificity RNA methyltransferase RlmN from Psychrobacter arcticus (strain DSM 17307 / VKM B-2377 / 273-4).